The chain runs to 282 residues: Bis(5'-nucleosyl)-tetraphosphatase, symmetrical (282 aa).

The protein belongs to the Ap4A hydrolase family.

It carries out the reaction P(1),P(4)-bis(5'-adenosyl) tetraphosphate + H2O = 2 ADP + 2 H(+). Hydrolyzes diadenosine 5',5'''-P1,P4-tetraphosphate to yield ADP. The chain is Bis(5'-nucleosyl)-tetraphosphatase, symmetrical from Burkholderia pseudomallei (strain 668).